We begin with the raw amino-acid sequence, 165 residues long: MTRKQRRLMMIGGAGVVLVVAVGLVLNAMRGSIVFFSTPKMVHEQNIEAGKRFRLGGVVEPGSLTRGDQLAVAFKVSDGDATVPVAFKGILPDLFREGQGVIAEGALDTAGVFKADTVLAKHDETYMPKDVADALKKQGHWKDDYEKKPPGPGAAASADAMRPAR.

Topologically, residues 1 to 7 are cytoplasmic; it reads MTRKQRR. A helical; Signal-anchor for type II membrane protein membrane pass occupies residues 8 to 28; that stretch reads LMMIGGAGVVLVVAVGLVLNA. Over 29–165 the chain is Periplasmic; the sequence is MRGSIVFFST…ASADAMRPAR (137 aa). Heme-binding residues include His122 and Tyr126. Basic and acidic residues predominate over residues 138 to 149; that stretch reads QGHWKDDYEKKP. Residues 138–165 are disordered; it reads QGHWKDDYEKKPPGPGAAASADAMRPAR. Over residues 153-165 the composition is skewed to low complexity; sequence GAAASADAMRPAR.

It belongs to the CcmE/CycJ family.

The protein resides in the cell inner membrane. Heme chaperone required for the biogenesis of c-type cytochromes. Transiently binds heme delivered by CcmC and transfers the heme to apo-cytochromes in a process facilitated by CcmF and CcmH. The sequence is that of Cytochrome c-type biogenesis protein CcmE from Rhodopseudomonas palustris (strain HaA2).